A 321-amino-acid polypeptide reads, in one-letter code: tRNA-5-methyluridine(54) 2-sulfurtransferase (321 aa).

Zn(2+) contacts are provided by cysteine 3, cysteine 6, cysteine 22, and histidine 25. ATP-binding positions include 53 to 55, aspartate 59, and isoleucine 79; that span reads AVS. Positions 130 and 133 each coordinate [4Fe-4S] cluster. A Glycyl lysine isopeptide (Lys-Gly) (interchain with G-Cter in TtuB) cross-link involves residue lysine 137. Residues glycine 156 and aspartate 161 each coordinate ATP. Cysteine 222 contributes to the [4Fe-4S] cluster binding site. Glycyl lysine isopeptide (Lys-Gly) (interchain with G-Cter in TtuB) cross-links involve residues lysine 226 and lysine 229. Cysteine 274, cysteine 277, cysteine 286, and cysteine 289 together coordinate Zn(2+).

This sequence belongs to the TtcA family. TtuA subfamily. Homodimer. Is able to form a heterocomplex with TtuB. It depends on [4Fe-4S] cluster as a cofactor. The cofactor is Mg(2+). Conjugated to TtuB via covalent linkages involving Lys-137, Lys-226 and Lys-229.

It carries out the reaction [TtuB sulfur-carrier protein]-C-terminal-Gly-aminoethanethioate + 5-methyluridine(54) in tRNA + ATP + H2O = [TtuB sulfur-carrier protein]-C-terminal Gly-Gly + 5-methyl-2-thiouridine(54) in tRNA + AMP + diphosphate + H(+). Its pathway is tRNA modification. With respect to regulation, enzymatic activity may be regulated by TtuB conjugation. In terms of biological role, catalyzes the ATP-dependent 2-thiolation of 5-methyluridine residue at position 54 in the T loop of tRNAs, leading to 5-methyl-2-thiouridine (m(5)s(2)U or s(2)T). This modification allows thermal stabilization of tRNAs in thermophilic microorganisms, and is required for cell growth at high temperatures. TtuA transfers the S atom from the thiocarboxylated C-terminus of TtuB to tRNA. The protein is tRNA-5-methyluridine(54) 2-sulfurtransferase of Thermus thermophilus (strain ATCC BAA-163 / DSM 7039 / HB27).